Reading from the N-terminus, the 1079-residue chain is Error-prone DNA polymerase (1079 aa).

It belongs to the DNA polymerase type-C family. DnaE2 subfamily.

The protein resides in the cytoplasm. The enzyme catalyses DNA(n) + a 2'-deoxyribonucleoside 5'-triphosphate = DNA(n+1) + diphosphate. Its function is as follows. DNA polymerase involved in damage-induced mutagenesis and translesion synthesis (TLS). It is not the major replicative DNA polymerase. The polypeptide is Error-prone DNA polymerase (Ralstonia pickettii (strain 12J)).